We begin with the raw amino-acid sequence, 216 residues long: UPF0502 protein Spea_2482 (216 aa).

This sequence belongs to the UPF0502 family.

This Shewanella pealeana (strain ATCC 700345 / ANG-SQ1) protein is UPF0502 protein Spea_2482.